The following is a 115-amino-acid chain: Putative UPF0377 protein YHL045W (115 aa).

The helical transmembrane segment at 10 to 30 (ACIFIDSVCEGIVFWGLCLFV) threads the bilayer.

This sequence belongs to the UPF0377 family.

The protein resides in the membrane. This Saccharomyces cerevisiae (strain ATCC 204508 / S288c) (Baker's yeast) protein is Putative UPF0377 protein YHL045W.